The following is a 1243-amino-acid chain: DNA polymerase II large subunit (1243 aa).

Belongs to the archaeal DNA polymerase II family. Heterodimer of a large subunit and a small subunit.

The catalysed reaction is DNA(n) + a 2'-deoxyribonucleoside 5'-triphosphate = DNA(n+1) + diphosphate. It carries out the reaction Exonucleolytic cleavage in the 3'- to 5'-direction to yield nucleoside 5'-phosphates.. Its function is as follows. Possesses two activities: a DNA synthesis (polymerase) and an exonucleolytic activity that degrades single-stranded DNA in the 3'- to 5'-direction. Has a template-primer preference which is characteristic of a replicative DNA polymerase. In Nanoarchaeum equitans (strain Kin4-M), this protein is DNA polymerase II large subunit.